We begin with the raw amino-acid sequence, 194 residues long: Dihydrofolate reductase HdrB (194 aa).

The DHFR domain occupies 18–194 (RFVLVAAVAD…ADRGAEESDE (177 aa)). NADP(+)-binding positions include alanine 24 and 30 to 36 (VIGRDGT). Residue aspartate 44 coordinates substrate. NADP(+) is bound at residue 62–63 (KT). Positions 69 and 78 each coordinate substrate. Residues 84–85 (TT) and 123–130 (GGATVYEQ) each bind NADP(+). Threonine 141 contacts substrate. A disordered region spans residues 173–194 (SFVTYERKQPAAADRGAEESDE).

Belongs to the dihydrofolate reductase family.

The enzyme catalyses (6S)-5,6,7,8-tetrahydrofolate + NADP(+) = 7,8-dihydrofolate + NADPH + H(+). It participates in cofactor biosynthesis; tetrahydrofolate biosynthesis; 5,6,7,8-tetrahydrofolate from 7,8-dihydrofolate: step 1/1. With respect to regulation, maximum activity at KCl concentration of 0.5 M and activity decreases with increasing concentration of KCl. Its function is as follows. Key enzyme in folate metabolism. Catalyzes an essential reaction for de novo glycine and purine synthesis, and for DNA precursor synthesis. The chain is Dihydrofolate reductase HdrB (hdrB) from Haloferax volcanii (Halobacterium volcanii).